The following is a 506-amino-acid chain: Pleckstrin homology domain-containing family D member 1 (506 aa).

Residues 28 to 136 enclose the PH domain; that stretch reads KVQLYGVLWK…WLEMLQESGK (109 aa). Residues 146–391 adopt a coiled-coil conformation; the sequence is EAMIKSLEAQ…KVRNKEKEER (246 aa). Arg503 is subject to Omega-N-methylarginine.

The protein belongs to the PLEKHD1 family.

The protein is Pleckstrin homology domain-containing family D member 1 (PLEKHD1) of Homo sapiens (Human).